The following is a 474-amino-acid chain: Cysteine--tRNA ligase (474 aa).

Residue C29 coordinates Zn(2+). Residues 31–41 carry the 'HIGH' region motif; the sequence is ATVQGEPHVGH. Positions 211, 236, and 240 each coordinate Zn(2+). A 'KMSKS' region motif is present at residues 267–271; it reads KMSKS. K270 is a binding site for ATP.

The protein belongs to the class-I aminoacyl-tRNA synthetase family. As to quaternary structure, monomer. Requires Zn(2+) as cofactor.

The protein resides in the cytoplasm. It carries out the reaction tRNA(Cys) + L-cysteine + ATP = L-cysteinyl-tRNA(Cys) + AMP + diphosphate. The polypeptide is Cysteine--tRNA ligase (Beutenbergia cavernae (strain ATCC BAA-8 / DSM 12333 / CCUG 43141 / JCM 11478 / NBRC 16432 / NCIMB 13614 / HKI 0122)).